Here is a 518-residue protein sequence, read N- to C-terminus: Mitochondrial distribution and morphology protein 34 (518 aa).

Positions 1–198 (MSFKVNWNTL…LPTLIHRLSL (198 aa)) constitute an SMP-LTD domain. Disordered stretches follow at residues 335-369 (SRPKRRVIKLGSKKSSVKSTPSAETLASPIPSEMS) and 491-518 (IPDVKSHPGTGRKLDTGFEMPPPPPYQV). The segment covering 336–350 (RPKRRVIKLGSKKSS) has biased composition (basic residues). Residues 492 to 506 (PDVKSHPGTGRKLDT) are compositionally biased toward basic and acidic residues.

The protein belongs to the MDM34 family. Component of the ER-mitochondria encounter structure (ERMES) or MDM complex, composed of MMM1, MDM10, MDM12 and MDM34.

It is found in the mitochondrion outer membrane. In terms of biological role, component of the ERMES/MDM complex, which serves as a molecular tether to connect the endoplasmic reticulum (ER) and mitochondria. Components of this complex are involved in the control of mitochondrial shape and protein biogenesis, and function in nonvesicular lipid trafficking between the ER and mitochondria. MDM34 is required for the interaction of the ER-resident membrane protein MMM1 and the outer mitochondrial membrane-resident beta-barrel protein MDM10. This is Mitochondrial distribution and morphology protein 34 from Meyerozyma guilliermondii (strain ATCC 6260 / CBS 566 / DSM 6381 / JCM 1539 / NBRC 10279 / NRRL Y-324) (Yeast).